The following is a 177-amino-acid chain: SPbeta prophage-derived uncharacterized N-acetyltransferase YokL (177 aa).

The 160-residue stretch at 11-170 (LTLRAIQPED…DGICFGMTRE (160 aa)) folds into the N-acetyltransferase domain.

The protein belongs to the acetyltransferase family.

This is SPbeta prophage-derived uncharacterized N-acetyltransferase YokL (yokL) from Bacillus subtilis (strain 168).